Here is a 1489-residue protein sequence, read N- to C-terminus: FERM domain-containing protein C (1489 aa).

Polar residues-rich tracts occupy residues 59-79 and 103-118; these read DTES…NFNS and NSPL…STSI. Disordered stretches follow at residues 59 to 86, 103 to 197, 252 to 271, and 277 to 312; these read DTES…HQHL, NSPL…PSTL, NSVQ…NNNN, and EQQQ…TPDS. Over residues 131 to 153 the composition is skewed to low complexity; that stretch reads SSSSSSSDGDSNSSSDSSDNSSE. The segment covering 163-172 has biased composition (basic residues); that stretch reads HLHLHRHHRK. The span at 181 to 195 shows a compositional bias: low complexity; it reads FESSSESSEQYGSPS. Residues 202-289 adopt a coiled-coil conformation; it reads ALKLEKIMQI…QEKQQQQQQH (88 aa). Residues 277–287 show a composition bias toward low complexity; it reads EQQQEKQQQQQ. A compositionally biased stretch (polar residues) spans 303-312; the sequence is RSVSISTPDS. A coiled-coil region spans residues 356–383; the sequence is IKVSKVLEEEMQLQQEFEKQEQLRHSAR. Disordered regions lie at residues 396–435, 459–479, and 508–569; these read NLQD…ENQN, VITP…KILT, and EDPL…TTTT. Residues 421 to 435 are compositionally biased toward low complexity; that stretch reads ENVSNDNSSDNENQN. Polar residues predominate over residues 545–555; it reads TASSSSSPTLQ. Low complexity predominate over residues 556-569; sequence ATKTTTTTTTTTTT. In terms of domain architecture, FERM spans 637–934; it reads ILVHISLVDQ…GYKYFIQHDE (298 aa). 13 LRR repeats span residues 1017 to 1040, 1053 to 1075, 1087 to 1110, 1111 to 1133, 1167 to 1191, 1196 to 1219, 1254 to 1278, 1282 to 1306, 1339 to 1362, 1367 to 1391, 1395 to 1418, 1428 to 1450, and 1451 to 1474; these read KVEL…LKDT, ENLN…AFEP, HLNL…IEKY, PNIE…VILR, NKTI…IFEG, SLSL…KFIK, SCHI…VIKG, NQTI…LCQS, NKTI…AIGT, NETL…ILNG, NSTI…SLAN, VITL…QLST, and NIPI…IKNA.

In Dictyostelium discoideum (Social amoeba), this protein is FERM domain-containing protein C (frmC).